Reading from the N-terminus, the 234-residue chain is MLTYETWEENDVSFSKEDETKGALSVLSWAYKEYKSEIVYACSFGVEGMVLLHLINQVNPSAKVVFLDTNVHFQETYELIQKVRERFPSLNIIEKQPKLTLDEQDKLHGDKLWESNPNLCCKIRKILPLEESLANEKAWISGLRREQSETRKHTKFINQDHRFQSIKVCPLIHWTWKEVWRYVYKHSLPYNPLHDIGYPSIGCEKCTLPVGEGGDSRDGRWAGKVKTECGLHYQ.

4 residues coordinate [4Fe-4S] cluster: Cys-120, Cys-121, Cys-203, and Cys-206. Cys-229 (nucleophile; cysteine thiosulfonate intermediate) is an active-site residue.

Belongs to the PAPS reductase family. CysH subfamily. Requires [4Fe-4S] cluster as cofactor.

It is found in the cytoplasm. It catalyses the reaction [thioredoxin]-disulfide + sulfite + AMP + 2 H(+) = adenosine 5'-phosphosulfate + [thioredoxin]-dithiol. Its pathway is sulfur metabolism; hydrogen sulfide biosynthesis; sulfite from sulfate. Functionally, catalyzes the formation of sulfite from adenosine 5'-phosphosulfate (APS) using thioredoxin as an electron donor. This Bacillus cereus (strain AH820) protein is Adenosine 5'-phosphosulfate reductase.